Here is an 89-residue protein sequence, read N- to C-terminus: Small ribosomal subunit protein uS14 (89 aa).

This sequence belongs to the universal ribosomal protein uS14 family. Part of the 30S ribosomal subunit. Contacts proteins S3 and S10.

Its function is as follows. Binds 16S rRNA, required for the assembly of 30S particles and may also be responsible for determining the conformation of the 16S rRNA at the A site. The protein is Small ribosomal subunit protein uS14 of Acholeplasma laidlawii (strain PG-8A).